The primary structure comprises 286 residues: Diaminopimelate epimerase (286 aa).

Residues asparagine 22, glutamine 56, and asparagine 76 each contribute to the substrate site. Cysteine 85 serves as the catalytic Proton donor. Substrate-binding positions include 86–87, asparagine 169, asparagine 202, and 220–221; these read GN and ER. Cysteine 229 serves as the catalytic Proton acceptor. 230–231 serves as a coordination point for substrate; that stretch reads GS.

It belongs to the diaminopimelate epimerase family. In terms of assembly, homodimer.

The protein localises to the cytoplasm. The catalysed reaction is (2S,6S)-2,6-diaminopimelate = meso-2,6-diaminopimelate. The protein operates within amino-acid biosynthesis; L-lysine biosynthesis via DAP pathway; DL-2,6-diaminopimelate from LL-2,6-diaminopimelate: step 1/1. Functionally, catalyzes the stereoinversion of LL-2,6-diaminopimelate (L,L-DAP) to meso-diaminopimelate (meso-DAP), a precursor of L-lysine and an essential component of the bacterial peptidoglycan. This is Diaminopimelate epimerase from Buchnera aphidicola subsp. Baizongia pistaciae (strain Bp).